The chain runs to 397 residues: 4-O-methyl-glucuronoyl methylesterase (397 aa).

Residues 1–18 (MVHLTSALLVAGAAFAAA) form the signal peptide. Intrachain disulfides connect cysteine 31-cysteine 65, cysteine 212-cysteine 347, and cysteine 244-cysteine 319. A GXSYXG catalytic site motif motif is present at residues 211 to 216 (GCSRNG). The Nucleophile role is filled by serine 213. Substrate-binding residues include lysine 217, glutamine 259, glutamate 267, and tryptophan 310. The Proton donor/acceptor role is filled by histidine 346.

The protein belongs to the carbohydrate esterase 15 (CE15) family.

The protein resides in the secreted. The enzyme catalyses a 4-O-methyl-alpha-D-glucuronosyl ester derivative + H2O = 4-O-methyl-alpha-D-glucuronate derivative + an alcohol + H(+). Glucuronoyl esterase which may play a significant role in biomass degradation, as it is considered to disconnect hemicellulose from lignin through the hydrolysis of the ester bond between 4-O-methyl-D-glucuronic acid residues of glucuronoxylans and aromatic alcohols of lignin. The sequence is that of 4-O-methyl-glucuronoyl methylesterase (ge2) from Thermothelomyces thermophilus (strain ATCC 42464 / BCRC 31852 / DSM 1799) (Sporotrichum thermophile).